The primary structure comprises 264 residues: Ferric siderophore reductase (264 aa).

The FAD-binding FR-type domain maps to 9–127 (SPTRLTYISD…PGPLKMNRFD (119 aa)). Positions 73, 74, 76, 90, 92, 96, 100, 101, 247, 249, 250, and 252 each coordinate FAD.

Belongs to the SIP oxidoreductase family. It depends on FAD as a cofactor.

Its function is as follows. Ferric-siderophore reductase involved in iron removal from the siderophores after their transport into the cell. Catalyzes the reduction of the ferric iron bound to the hydroxamate siderophores produced by Shewanella to ferrous iron. Can use a ferredoxin as electron donor. Despite the clear evidence for the interaction with NAD(P)H, no direct reduction of the enzyme by these compounds is observed, nor consumption of NAD(P)H, suggesting that NADH and NADPH are not the physiological electron donors. This is Ferric siderophore reductase from Shewanella frigidimarina (strain NCIMB 400).